We begin with the raw amino-acid sequence, 130 residues long: Small ribosomal subunit protein eS17 (130 aa).

Over residues Q74–Y84 the composition is skewed to basic and acidic residues. The segment at Q74–T97 is disordered.

It belongs to the eukaryotic ribosomal protein eS17 family.

The polypeptide is Small ribosomal subunit protein eS17 (rps-17) (Caenorhabditis elegans).